The following is a 557-amino-acid chain: Organic cation/carnitine transporter 2 (557 aa).

The Cytoplasmic portion of the chain corresponds to 1 to 20; it reads MRDYDEVTAFLGEWGPFQRL. A helical transmembrane segment spans residues 21-41; the sequence is IFFLLSASIIPNGFTGLSSVF. Residues 42–142 lie on the Extracellular side of the membrane; the sequence is LIATPEHRCR…NLVCEDDWKA (101 aa). N-linked (GlcNAc...) asparagine glycans are attached at residues Asn57, Asn64, and Asn91. A helical transmembrane segment spans residues 143 to 163; sequence PLTISLFFVGVLLGSFISGQL. Residues 164–172 lie on the Cytoplasmic side of the membrane; it reads SDRFGRKNV. A helical membrane pass occupies residues 173-193; it reads LFVTMGMQTGFSFLQIFSKNF. Residues 194-197 lie on the Extracellular side of the membrane; sequence EMFV. The helical transmembrane segment at 198 to 218 threads the bilayer; that stretch reads VLFVLVGMGQISNYVAAFVLG. 218-225 serves as a coordination point for ATP; it reads GTEILGKS. Over 219–232 the chain is Cytoplasmic; it reads TEILGKSVRIIFST. Residues 233 to 253 form a helical membrane-spanning segment; it reads LGVCIFYAFGYMVLPLFAYFI. The Extracellular segment spans residues 254–257; that stretch reads RDWR. Residues 258–278 traverse the membrane as a helical segment; sequence MLLVALTMPGVLCVALWWFIP. At 279 to 341 the chain is on the cytoplasmic side; it reads ESPRWLISQG…LDLLRTWNIR (63 aa). Residues 342 to 362 traverse the membrane as a helical segment; sequence MVTIMSIMLWMTISVGYFGLS. Residues 363-373 are Extracellular-facing; sequence LDTPNLHGDIF. A helical transmembrane segment spans residues 374-394; that stretch reads VNCFLSAMVEVPAYVLAWLLL. Over 395-406 the chain is Cytoplasmic; that stretch reads QYLPRRYSMATA. A helical membrane pass occupies residues 407-427; sequence LFLGGSVLLFMQLVPPDLYYL. Residues 428 to 430 lie on the Extracellular side of the membrane; the sequence is ATV. Residues 431-451 traverse the membrane as a helical segment; the sequence is LVMVGKFGVTAAFSMVYVYTA. Residues 452-462 lie on the Cytoplasmic side of the membrane; it reads ELYPTVVRNMG. Residues 463 to 483 traverse the membrane as a helical segment; sequence VGVSSTASRLGSILSPYFVYL. Residues 484 to 488 are Extracellular-facing; that stretch reads GAYDR. A Phosphotyrosine modification is found at Tyr486. A helical membrane pass occupies residues 489 to 509; it reads FLPYILMGSLTILTAILTLFL. The disordered stretch occupies residues 535–557; the sequence is TPSHTRMLKDGQERPTILKSTAF. Thr550 is subject to Phosphothreonine.

The protein belongs to the major facilitator (TC 2.A.1) superfamily. Organic cation transporter (TC 2.A.1.19) family. As to quaternary structure, interacts with PDZK1. Post-translationally, glycosylated. Glycosylation affects the expression levels. In terms of processing, not glycosylated. Strongly expressed in kidney, skeletal muscle, heart and placenta. Primarily expressed by surface epithelial cells of the colon (at protein level). Expressed in CD68 macrophage and CD43 T-cells but not in CD20 B-cells. In testis, localized to Sertoli cell basal membranes, peritubular myoid cells and Leydig cells.

The protein resides in the cell membrane. Its subcellular location is the apical cell membrane. It localises to the basal cell membrane. The protein localises to the endoplasmic reticulum. It catalyses the reaction (R)-carnitine(out) + Na(+)(out) = (R)-carnitine(in) + Na(+)(in). It carries out the reaction glycine betaine(out) + Na(+)(out) = glycine betaine(in) + Na(+)(in). The catalysed reaction is glycine betaine(out) + (R)-carnitine(in) = glycine betaine(in) + (R)-carnitine(out). The enzyme catalyses O-butanoyl-(R)-carnitine(out) + Na(+)(out) = O-butanoyl-(R)-carnitine(in) + Na(+)(in). It catalyses the reaction O-acetyl-(R)-carnitine(out) + Na(+)(out) = O-acetyl-(R)-carnitine(in) + Na(+)(in). It carries out the reaction O-propanoyl-(R)-carnitine(out) + Na(+)(out) = O-propanoyl-(R)-carnitine(in) + Na(+)(in). The catalysed reaction is (S)-carnitine(out) + Na(+)(out) = (S)-carnitine(in) + Na(+)(in). The enzyme catalyses an O-acyl-(R)-carnitine(out) + Na(+)(out) = an O-acyl-(R)-carnitine(in) + Na(+)(in). It catalyses the reaction L-glutamyl-L-arginyl-glycyl-L-methionyl-L-threonine(out) + Na(+)(out) = L-glutamyl-L-arginyl-glycyl-L-methionyl-L-threonine(in) + Na(+)(in). It carries out the reaction N,N-dimethylglycine(out) + Na(+)(out) = N,N-dimethylglycine(in) + Na(+)(in). Inhibited by emetine, quinidine and verapamil. The IC(50) of emetine is 4.2 uM. Not inhibited by valproic acid. Transport of (R)-carnitine is stimulated by cholesterol in the plasma membrane. In terms of biological role, sodium-ion dependent, high affinity carnitine transporter. Involved in the active cellular uptake of carnitine. Transports one sodium ion with one molecule of carnitine. Also transports organic cations such as tetraethylammonium (TEA) without the involvement of sodium. Relative uptake activity ratio of carnitine to TEA is 11.3. In intestinal epithelia, transports the quorum-sensing pentapeptide CSF (competence and sporulation factor) from B.subtilis which induces cytoprotective heat shock proteins contributing to intestinal homeostasis. May also contribute to regulate the transport of organic compounds in testis across the blood-testis-barrier. Functionally, retained in the ER, unable to perform carnitine uptake. The protein is Organic cation/carnitine transporter 2 of Homo sapiens (Human).